Reading from the N-terminus, the 206-residue chain is FMN-dependent NADH:quinone oxidoreductase (206 aa).

Residues Ser-9, 15 to 17 (SVS), 95 to 98 (MYNF), and 139 to 142 (SRGG) contribute to the FMN site.

It belongs to the azoreductase type 1 family. Homodimer. The cofactor is FMN.

The enzyme catalyses 2 a quinone + NADH + H(+) = 2 a 1,4-benzosemiquinone + NAD(+). The catalysed reaction is N,N-dimethyl-1,4-phenylenediamine + anthranilate + 2 NAD(+) = 2-(4-dimethylaminophenyl)diazenylbenzoate + 2 NADH + 2 H(+). Functionally, quinone reductase that provides resistance to thiol-specific stress caused by electrophilic quinones. Its function is as follows. Also exhibits azoreductase activity. Catalyzes the reductive cleavage of the azo bond in aromatic azo compounds to the corresponding amines. This chain is FMN-dependent NADH:quinone oxidoreductase, found in Legionella pneumophila subsp. pneumophila (strain Philadelphia 1 / ATCC 33152 / DSM 7513).